A 428-amino-acid chain; its full sequence is Trigger factor (428 aa).

Positions Gly-163–Pro-248 constitute a PPIase FKBP-type domain.

This sequence belongs to the FKBP-type PPIase family. Tig subfamily.

The protein localises to the cytoplasm. It carries out the reaction [protein]-peptidylproline (omega=180) = [protein]-peptidylproline (omega=0). Functionally, involved in protein export. Acts as a chaperone by maintaining the newly synthesized protein in an open conformation. Functions as a peptidyl-prolyl cis-trans isomerase. The sequence is that of Trigger factor from Anoxybacillus flavithermus (strain DSM 21510 / WK1).